The following is a 115-amino-acid chain: Large ribosomal subunit protein uL22 (115 aa).

Belongs to the universal ribosomal protein uL22 family. As to quaternary structure, part of the 50S ribosomal subunit.

Functionally, this protein binds specifically to 23S rRNA; its binding is stimulated by other ribosomal proteins, e.g. L4, L17, and L20. It is important during the early stages of 50S assembly. It makes multiple contacts with different domains of the 23S rRNA in the assembled 50S subunit and ribosome. Its function is as follows. The globular domain of the protein is located near the polypeptide exit tunnel on the outside of the subunit, while an extended beta-hairpin is found that lines the wall of the exit tunnel in the center of the 70S ribosome. The chain is Large ribosomal subunit protein uL22 from Limosilactobacillus fermentum (strain NBRC 3956 / LMG 18251) (Lactobacillus fermentum).